The primary structure comprises 189 residues: Lutzicidin (189 aa).

The signal sequence occupies residues 1–22; the sequence is MQGFFWKTLLVVALCGTSSSLA. The propeptide occupies 23–155; it reads HRPLSYGEAL…DEEKDRPKRV (133 aa). Disulfide bonds link Cys79-Cys90 and Cys101-Cys118. The segment covering 125–148 has biased composition (acidic residues); it reads EEEEEDEEEQKAEVEKDEEKEDEE. The tract at residues 125–152 is disordered; that stretch reads EEEEEDEEEQKAEVEKDEEKEDEEKDRP.

Belongs to the cathelicidin family. Expressed by the venom gland.

It is found in the secreted. It localises to the target cell membrane. Its function is as follows. Potent antimicrobial peptide against Gram-negative and Gram-positive bacteria. Adopts an amphipathic alpha helical conformation, that may allow to partition into the target membrane. Low hemolytic activities have been observed on mammalian cells. The sequence is that of Lutzicidin from Bothrops lutzi (Sertao lancehead).